We begin with the raw amino-acid sequence, 456 residues long: GTPase Der (456 aa).

EngA-type G domains are found at residues 3–167 and 185–360; these read FTIA…PETE and IRVA…AVWN. Residues 9-16, 56-60, 119-122, 191-198, 238-242, and 303-306 contribute to the GTP site; these read GRPNVGKS, DTAGL, NKSE, GRPNAGKS, and NKWD. The KH-like domain maps to 361–445; that stretch reads RRVPTAALNR…PVRITLREKA (85 aa).

This sequence belongs to the TRAFAC class TrmE-Era-EngA-EngB-Septin-like GTPase superfamily. EngA (Der) GTPase family. In terms of assembly, associates with the 50S ribosomal subunit.

In terms of biological role, GTPase that plays an essential role in the late steps of ribosome biogenesis. The sequence is that of GTPase Der from Bradyrhizobium sp. (strain BTAi1 / ATCC BAA-1182).